The following is a 280-amino-acid chain: Phosphonates import ATP-binding protein PhnC 1 (280 aa).

The ABC transporter domain maps to 3–247 (FRLDAASVSY…LLRELYASES (245 aa)). 36-43 (GPSGAGKT) is an ATP binding site.

Belongs to the ABC transporter superfamily. Phosphonates importer (TC 3.A.1.9.1) family. In terms of assembly, the complex is composed of two ATP-binding proteins (PhnC), two transmembrane proteins (PhnE) and a solute-binding protein (PhnD).

Its subcellular location is the cell inner membrane. It catalyses the reaction phosphonate(out) + ATP + H2O = phosphonate(in) + ADP + phosphate + H(+). Part of the ABC transporter complex PhnCDE involved in phosphonates import. Responsible for energy coupling to the transport system. This chain is Phosphonates import ATP-binding protein PhnC 1, found in Cupriavidus necator (strain ATCC 17699 / DSM 428 / KCTC 22496 / NCIMB 10442 / H16 / Stanier 337) (Ralstonia eutropha).